The sequence spans 238 residues: tRNA (guanine-N(7)-)-methyltransferase (238 aa).

S-adenosyl-L-methionine is bound by residues E68, E93, D120, and D143. The active site involves D143. Substrate-binding positions include K147, D179, and 216-219 (TKFE).

This sequence belongs to the class I-like SAM-binding methyltransferase superfamily. TrmB family.

The catalysed reaction is guanosine(46) in tRNA + S-adenosyl-L-methionine = N(7)-methylguanosine(46) in tRNA + S-adenosyl-L-homocysteine. The protein operates within tRNA modification; N(7)-methylguanine-tRNA biosynthesis. Functionally, catalyzes the formation of N(7)-methylguanine at position 46 (m7G46) in tRNA. This Shewanella sp. (strain MR-4) protein is tRNA (guanine-N(7)-)-methyltransferase.